A 119-amino-acid polypeptide reads, in one-letter code: Dihydroneopterin aldolase (119 aa).

Substrate is bound by residues E21, Y53, and 72–73 (IE). Residue K99 is the Proton donor/acceptor of the active site.

Belongs to the DHNA family.

The catalysed reaction is 7,8-dihydroneopterin = 6-hydroxymethyl-7,8-dihydropterin + glycolaldehyde. Its pathway is cofactor biosynthesis; tetrahydrofolate biosynthesis; 2-amino-4-hydroxy-6-hydroxymethyl-7,8-dihydropteridine diphosphate from 7,8-dihydroneopterin triphosphate: step 3/4. Catalyzes the conversion of 7,8-dihydroneopterin to 6-hydroxymethyl-7,8-dihydropterin. The polypeptide is Dihydroneopterin aldolase (folB) (Streptococcus pyogenes serotype M1).